A 268-amino-acid polypeptide reads, in one-letter code: tRNA pseudouridine synthase A (268 aa).

Aspartate 52 functions as the Nucleophile in the catalytic mechanism. Tyrosine 113 is a substrate binding site.

It belongs to the tRNA pseudouridine synthase TruA family. In terms of assembly, homodimer.

The enzyme catalyses uridine(38/39/40) in tRNA = pseudouridine(38/39/40) in tRNA. Functionally, formation of pseudouridine at positions 38, 39 and 40 in the anticodon stem and loop of transfer RNAs. The sequence is that of tRNA pseudouridine synthase A from Rhizobium leguminosarum bv. trifolii (strain WSM2304).